A 279-amino-acid polypeptide reads, in one-letter code: Coiled-coil domain-containing protein 106 (279 aa).

A coiled-coil region spans residues Lys62–Arg101. Over residues Arg109–Ser121 the composition is skewed to basic and acidic residues. Positions Arg109–Gln173 are disordered. Phosphoserine is present on Ser129. The Bipartite nuclear localization signal signature appears at Lys151–Phe164. A compositionally biased stretch (basic residues) spans Lys151–Thr167.

In terms of assembly, interacts with p53/TP53.

Its subcellular location is the nucleus. In terms of biological role, promotes the degradation of p53/TP53 protein and inhibits its transactivity. The sequence is that of Coiled-coil domain-containing protein 106 (Ccdc106) from Mus musculus (Mouse).